The chain runs to 944 residues: Thyroid peroxidase (944 aa).

Residues 1–30 form the signal peptide; that stretch reads MVGLVPAGSAWGGRALAVLGVTLLVALARG. The Extracellular segment spans residues 31–858; the sequence is LLPFFLGGRD…SGRLPKASLV (828 aa). The N-linked (GlcNAc...) asparagine glycan is linked to Asn-141. The cysteines at positions 154 and 170 are disulfide-linked. Heme b is bound at residue Asp-250. The Proton acceptor role is filled by His-251. Asp-252 provides a ligand contact to Ca(2+). Disulfide bonds link Cys-271-Cys-281 and Cys-275-Cys-295. Asn-316 carries an N-linked (GlcNAc...) asparagine glycan. Positions 330, 332, 334, and 336 each coordinate Ca(2+). A glycan (N-linked (GlcNAc...) asparagine) is linked at Asn-351. Glu-408 and His-503 together coordinate heme b. Disulfide bonds link Cys-606/Cys-663, Cys-704/Cys-729, Cys-750/Cys-790, Cys-776/Cys-802, Cys-808/Cys-822, Cys-816/Cys-831, and Cys-833/Cys-846. Asn-623 carries N-linked (GlcNAc...) asparagine glycosylation. Residues 748-804 form the Sushi domain; the sequence is DACGLPDSLDNGDVVLCGEAGRRVLVFSCRHGFKLQGPEQVACSPRGGAVRAPVCRD. Residues 804–847 form the EGF-like; calcium-binding domain; that stretch reads DINECEDASHPPCHGSARCRNTKGGFRCECTDPAVLGEDGTTCV. The chain crosses the membrane as a helical span at residues 859 to 879; sequence SIALGIVLVVGLAGLTWTLVC. Topologically, residues 880 to 944 are cytoplasmic; the sequence is RWAHAGRKAS…RSHVAQGSPA (65 aa). The tract at residues 895–944 is disordered; the sequence is LGGRGAPPPGRGAGQDGASGSLVPPLGPQGRTRAVDPTSSRSHVAQGSPA. Positions 931-944 are enriched in polar residues; the sequence is PTSSRSHVAQGSPA.

Belongs to the peroxidase family. XPO subfamily. As to quaternary structure, interacts with DUOX1, DUOX2 and CYBA. Requires Ca(2+) as cofactor. The cofactor is heme b. Post-translationally, heme is covalently bound through a H(2)O(2)-dependent autocatalytic process. Heme insertion is important for the delivery of protein at the cell surface. Cleaved in its N-terminal part.

Its subcellular location is the membrane. It catalyses the reaction 2 iodide + H2O2 + 2 H(+) = diiodine + 2 H2O. The catalysed reaction is [thyroglobulin]-L-tyrosine + iodide + H2O2 + H(+) = [thyroglobulin]-3-iodo-L-tyrosine + 2 H2O. The enzyme catalyses [thyroglobulin]-3-iodo-L-tyrosine + iodide + H2O2 + H(+) = [thyroglobulin]-3,5-diiodo-L-tyrosine + 2 H2O. It carries out the reaction 2 [thyroglobulin]-3,5-diiodo-L-tyrosine + H2O2 = [thyroglobulin]-L-thyroxine + [thyroglobulin]-dehydroalanine + 2 H2O. It catalyses the reaction [thyroglobulin]-3-iodo-L-tyrosine + [thyroglobulin]-3,5-diiodo-L-tyrosine + H2O2 = [thyroglobulin]-3,3',5-triiodo-L-thyronine + [thyroglobulin]-dehydroalanine + 2 H2O. It participates in hormone biosynthesis; thyroid hormone biosynthesis. Iodination and coupling of the hormonogenic tyrosines in thyroglobulin to yield the thyroid hormones T(3) and T(4). The polypeptide is Thyroid peroxidase (TPO) (Canis lupus familiaris (Dog)).